We begin with the raw amino-acid sequence, 211 residues long: RING finger protein narya (211 aa).

Residues C6–C47 form an RING-type zinc finger. Positions R149 to L211 are disordered. Residues S153–E165 show a composition bias toward basic and acidic residues. A compositionally biased stretch (low complexity) spans S172 to D184.

As to quaternary structure, may interact with itself, with nenya and vilya through its RING-type zinc finger. Expressed in nurse cell and pro-oocytes (at protein level).

Its subcellular location is the chromosome. Its function is as follows. Required for the formation of DNA double-strand breaks (DSBs) together with nenya and vilya during the meiotic recombination process. Plays a role in DSBs processing into crossovers. Plays a redundant role with nenya in chromosome segregation during female meiosis. This Drosophila melanogaster (Fruit fly) protein is RING finger protein narya.